The chain runs to 949 residues: Phosphocholine transferase AnkX (949 aa).

The region spanning 155–289 (LNPEQIPDLA…IFNTVEIIEQ (135 aa)) is the Fido domain. ANK repeat units follow at residues 391–420 (VGKTPAHLAVISGNMAMLDELIAKKADLSL), 424–453 (DGKTALHYAAECGNMQIMGKILKVVLSQED), 464–494 (HGKTAFHYAAEFGTPELISALTTTEVIQINE), 498–527 (SGSSAITLAYKNHKLKIFDELLNSGADISD), 554–583 (LNKEAFRIAISLGSVSLVKKFLRAGVDIDI), 588–617 (DKATPLMLSINSGNPKLVSYLLKKGANTRL), 658–687 (NGNPPLYNAVVVNDLKMATILLEMGARVDF), 691–720 (LGNNILHSAMRRCDLPIILDIVKKDSTLLH), 725–767 (ERRN…DLNK), and 771–800 (KGKTILDIALSKQYFHLCVKLMKAGAHTNI).

Its subcellular location is the secreted. The protein resides in the host cytoplasm. It catalyses the reaction [Rab1 protein]-L-serine + CDP-choline = [Rab1 protein]-O-phosphocholine-L-serine + CMP + H(+). Its function is as follows. Virulence effector that plays a role in hijacking the host vesicular trafficking by recruiting the small guanosine triphosphatase (GTPase) Rab1 to the cytosolic face of the Legionella-containing vacuole (LCVs). Acts as a phosphocholine transferase by mediating the addition of phosphocholine to Ser residues of host RAB1 (RAB1A, RAB1B or RAB1C) and RAB35, leading to displacement of GDP dissociation inhibitors (GDI). Phosphocholination of target proteins also impairs accessibility to GTPase effector LepB. Can act on both GDP-bound and GTP-bound Rab proteins. The chain is Phosphocholine transferase AnkX (ankX) from Legionella pneumophila subsp. pneumophila (strain Philadelphia 1 / ATCC 33152 / DSM 7513).